We begin with the raw amino-acid sequence, 493 residues long: MNQFPWLSIIILFPLFAAFFIPLLPSRENQTVRWYTLGICLLDFLVMSYIFGYYYDFHNSSFQFKESIEWIPTIGFKWALGVDGLSMGLILLTGLVTTLAVLAAWPITCNPKLFYFLMLVMYSGQIGLFTSQDLFLFFLMWELELIPIYLLISLWGGRRRLYAATKFIFYTAIGSLFLFIATFTVCFYGANIATWHFEDLAEKEYPFILEKILYLGFGFAYAVKLPIIPFHTWLPDTHGEAHYSTCMLLAGILLKMGGYGWIRINMTLFPNAHAYFAPWLVILGTVQIIYAASVCLSQKNLKRRIAYSSISHMGFVLIGICSFTNIGLSGAICQMISHGLIGASLFFLAGTTYDRIRTVSLSEMGGIALKMPKMFSMFTGFSLASLALPTMSGFVAEMMIFLGIISSTFYSPSFRCFIILFQALGVILTPIYLLSMLRQMFYGVDTFHFESMSFIDSGPREVFIIVSLFIPVIIIGLYPNILLSIWQNALSIL.

Helical transmembrane passes span 4-24 (FPWL…IPLL), 34-54 (WYTL…FGYY), 87-107 (MGLI…AWPI), 111-131 (PKLF…LFTS), 134-154 (LFLF…LISL), 167-187 (FIFY…TVCF), 212-232 (ILYL…PFHT), 242-262 (HYST…YGWI), 276-296 (FAPW…SVCL), 313-333 (MGFV…GAIC), 334-354 (QMIS…TTYD), 385-405 (SLAL…LGII), 417-437 (FIIL…LSML), and 462-482 (VFII…PNIL).

The protein belongs to the complex I subunit 4 family.

It localises to the plastid. The protein localises to the chloroplast thylakoid membrane. It catalyses the reaction a plastoquinone + NADH + (n+1) H(+)(in) = a plastoquinol + NAD(+) + n H(+)(out). The enzyme catalyses a plastoquinone + NADPH + (n+1) H(+)(in) = a plastoquinol + NADP(+) + n H(+)(out). This chain is NAD(P)H-quinone oxidoreductase chain 4, chloroplastic, found in Chara vulgaris (Common stonewort).